We begin with the raw amino-acid sequence, 289 residues long: ATP phosphoribosyltransferase (289 aa).

This sequence belongs to the ATP phosphoribosyltransferase family. Long subfamily. It depends on Mg(2+) as a cofactor.

The protein localises to the cytoplasm. It catalyses the reaction 1-(5-phospho-beta-D-ribosyl)-ATP + diphosphate = 5-phospho-alpha-D-ribose 1-diphosphate + ATP. Its pathway is amino-acid biosynthesis; L-histidine biosynthesis; L-histidine from 5-phospho-alpha-D-ribose 1-diphosphate: step 1/9. Its activity is regulated as follows. Feedback inhibited by histidine. Functionally, catalyzes the condensation of ATP and 5-phosphoribose 1-diphosphate to form N'-(5'-phosphoribosyl)-ATP (PR-ATP). Has a crucial role in the pathway because the rate of histidine biosynthesis seems to be controlled primarily by regulation of HisG enzymatic activity. This Pelotomaculum thermopropionicum (strain DSM 13744 / JCM 10971 / SI) protein is ATP phosphoribosyltransferase.